A 279-amino-acid chain; its full sequence is Biotin synthase (279 aa).

One can recognise a Radical SAM core domain in the interval 1-228 (MKDIFLCSIC…SARLMIAGGR (228 aa)). The [4Fe-4S] cluster site is built by cysteine 17, cysteine 21, and cysteine 24. Positions 61, 96, 154, and 221 each coordinate [2Fe-2S] cluster.

It belongs to the radical SAM superfamily. Biotin synthase family. Homodimer. [4Fe-4S] cluster is required as a cofactor. It depends on [2Fe-2S] cluster as a cofactor.

The enzyme catalyses (4R,5S)-dethiobiotin + (sulfur carrier)-SH + 2 reduced [2Fe-2S]-[ferredoxin] + 2 S-adenosyl-L-methionine = (sulfur carrier)-H + biotin + 2 5'-deoxyadenosine + 2 L-methionine + 2 oxidized [2Fe-2S]-[ferredoxin]. The protein operates within cofactor biosynthesis; biotin biosynthesis; biotin from 7,8-diaminononanoate: step 2/2. Its function is as follows. Catalyzes the conversion of dethiobiotin (DTB) to biotin by the insertion of a sulfur atom into dethiobiotin via a radical-based mechanism. This is Biotin synthase from Wolinella succinogenes (strain ATCC 29543 / DSM 1740 / CCUG 13145 / JCM 31913 / LMG 7466 / NCTC 11488 / FDC 602W) (Vibrio succinogenes).